The following is a 274-amino-acid chain: Rhamnulose-1-phosphate aldolase (274 aa).

Glu117 is a catalytic residue. The Zn(2+) site is built by His141, His143, and His212.

Belongs to the aldolase class II family. RhaD subfamily. In terms of assembly, homotetramer. Zn(2+) serves as cofactor.

It localises to the cytoplasm. The catalysed reaction is L-rhamnulose 1-phosphate = (S)-lactaldehyde + dihydroxyacetone phosphate. It functions in the pathway carbohydrate degradation; L-rhamnose degradation; glycerone phosphate from L-rhamnose: step 3/3. In terms of biological role, catalyzes the reversible cleavage of L-rhamnulose-1-phosphate to dihydroxyacetone phosphate (DHAP) and L-lactaldehyde. This Escherichia coli O17:K52:H18 (strain UMN026 / ExPEC) protein is Rhamnulose-1-phosphate aldolase.